A 258-amino-acid polypeptide reads, in one-letter code: Hemin import ATP-binding protein HmuV (258 aa).

Positions 2 to 242 constitute an ABC transporter domain; it reads LTAEKLCVER…SKIEELYDFP (241 aa). Position 34-41 (34-41) interacts with ATP; sequence GANGAGKS.

The protein belongs to the ABC transporter superfamily. Heme (hemin) importer (TC 3.A.1.14.5) family. In terms of assembly, the complex is composed of two ATP-binding proteins (HmuV), two transmembrane proteins (HmuU) and a solute-binding protein (HmuT).

Its subcellular location is the cell inner membrane. Part of the ABC transporter complex HmuTUV involved in hemin import. Responsible for energy coupling to the transport system. The polypeptide is Hemin import ATP-binding protein HmuV (Hydrogenovibrio crunogenus (strain DSM 25203 / XCL-2) (Thiomicrospira crunogena)).